Consider the following 227-residue polypeptide: tRNA (guanine-N(7)-)-methyltransferase (227 aa).

S-adenosyl-L-methionine-binding residues include glutamate 57, glutamate 82, aspartate 109, and aspartate 132. Residue aspartate 132 is part of the active site. Substrate is bound by residues lysine 136, aspartate 168, and 205–208 (TKFE).

Belongs to the class I-like SAM-binding methyltransferase superfamily. TrmB family.

The enzyme catalyses guanosine(46) in tRNA + S-adenosyl-L-methionine = N(7)-methylguanosine(46) in tRNA + S-adenosyl-L-homocysteine. The protein operates within tRNA modification; N(7)-methylguanine-tRNA biosynthesis. In terms of biological role, catalyzes the formation of N(7)-methylguanine at position 46 (m7G46) in tRNA. The sequence is that of tRNA (guanine-N(7)-)-methyltransferase from Leifsonia xyli subsp. xyli (strain CTCB07).